Here is a 420-residue protein sequence, read N- to C-terminus: Pre-mRNA-splicing factor RBM22 (420 aa).

The segment at 159 to 186 (RNRPHICSFWVKGECKRGEECPYRHEKP) adopts a C3H1-type zinc-finger fold. An RRM domain is found at 232-305 (TTLYVGGLGD…RRLNVKWGRS (74 aa)). 2 disordered regions span residues 303–343 (GRSQ…AAEE) and 372–420 (APPP…HSSP). Residues 309-318 (RGKEKDKEGT) show a composition bias toward basic and acidic residues.

It belongs to the SLT11 family. As to quaternary structure, component of the pre-catalytic and catalytic spliceosome complexes. Component of the postcatalytic spliceosome P complex.

It localises to the nucleus. The protein resides in the cytoplasm. Functionally, required for pre-mRNA splicing as component of the activated spliceosome. Involved in the first step of pre-mRNA splicing. Binds directly to the internal stem-loop (ISL) domain of the U6 snRNA and to the pre-mRNA intron near the 5' splice site during the activation and catalytic phases of the spliceosome cycle. This is Pre-mRNA-splicing factor RBM22 (RBM22) from Gallus gallus (Chicken).